We begin with the raw amino-acid sequence, 234 residues long: Probable Ufm1-specific protease 1 (234 aa).

Catalysis depends on residues C70, D194, and H196.

Belongs to the peptidase C78 family.

In terms of biological role, thiol protease which recognizes and hydrolyzes the peptide bond at the C-terminal Gly of UFM1, a ubiquitin-like modifier protein bound to a number of target proteins. This Drosophila melanogaster (Fruit fly) protein is Probable Ufm1-specific protease 1.